The following is a 301-amino-acid chain: N-acetylmuramic acid 6-phosphate etherase (301 aa).

One can recognise an SIS domain in the interval 57–220; it reads TYEKMLFGGR…STSLMIKKGK (164 aa). Glu85 functions as the Proton donor in the catalytic mechanism. Residue Glu116 is part of the active site.

This sequence belongs to the GCKR-like family. MurNAc-6-P etherase subfamily. As to quaternary structure, homodimer.

The enzyme catalyses N-acetyl-D-muramate 6-phosphate + H2O = N-acetyl-D-glucosamine 6-phosphate + (R)-lactate. It functions in the pathway amino-sugar metabolism; N-acetylmuramate degradation. In terms of biological role, specifically catalyzes the cleavage of the D-lactyl ether substituent of MurNAc 6-phosphate, producing GlcNAc 6-phosphate and D-lactate. This Clostridium botulinum (strain Eklund 17B / Type B) protein is N-acetylmuramic acid 6-phosphate etherase.